A 161-amino-acid polypeptide reads, in one-letter code: Phosphopantetheine adenylyltransferase (161 aa).

Substrate is bound at residue T9. Residues 9-10 (TF) and H17 contribute to the ATP site. Substrate is bound by residues K41, L73, and R87. ATP-binding positions include 88 to 90 (GLR), E98, and 123 to 129 (YSFISST).

This sequence belongs to the bacterial CoaD family. Homohexamer. Requires Mg(2+) as cofactor.

The protein resides in the cytoplasm. It carries out the reaction (R)-4'-phosphopantetheine + ATP + H(+) = 3'-dephospho-CoA + diphosphate. Its pathway is cofactor biosynthesis; coenzyme A biosynthesis; CoA from (R)-pantothenate: step 4/5. Reversibly transfers an adenylyl group from ATP to 4'-phosphopantetheine, yielding dephospho-CoA (dPCoA) and pyrophosphate. The polypeptide is Phosphopantetheine adenylyltransferase (Pseudomonas putida (strain ATCC 47054 / DSM 6125 / CFBP 8728 / NCIMB 11950 / KT2440)).